A 146-amino-acid polypeptide reads, in one-letter code: 3-hydroxyacyl-[acyl-carrier-protein] dehydratase FabZ (146 aa).

His47 is a catalytic residue.

It belongs to the thioester dehydratase family. FabZ subfamily.

It is found in the cytoplasm. The catalysed reaction is a (3R)-hydroxyacyl-[ACP] = a (2E)-enoyl-[ACP] + H2O. In terms of biological role, involved in unsaturated fatty acids biosynthesis. Catalyzes the dehydration of short chain beta-hydroxyacyl-ACPs and long chain saturated and unsaturated beta-hydroxyacyl-ACPs. In Methylococcus capsulatus (strain ATCC 33009 / NCIMB 11132 / Bath), this protein is 3-hydroxyacyl-[acyl-carrier-protein] dehydratase FabZ.